A 178-amino-acid chain; its full sequence is Large ribosomal subunit protein uL13m (178 aa).

This sequence belongs to the universal ribosomal protein uL13 family. Component of the mitochondrial ribosome large subunit (39S) which comprises a 16S rRNA and about 50 distinct proteins. Interacts with OXA1L.

It is found in the mitochondrion. This chain is Large ribosomal subunit protein uL13m (MRPL13), found in Bos taurus (Bovine).